The sequence spans 326 residues: Beta-ketoacyl-[acyl-carrier-protein] synthase III (326 aa).

Active-site residues include Cys113 and His253. The segment at 254–258 is ACP-binding; sequence QANIR. The active site involves Asn283.

The protein belongs to the thiolase-like superfamily. FabH family. Homodimer.

It localises to the cytoplasm. It carries out the reaction malonyl-[ACP] + acetyl-CoA + H(+) = 3-oxobutanoyl-[ACP] + CO2 + CoA. It functions in the pathway lipid metabolism; fatty acid biosynthesis. In terms of biological role, catalyzes the condensation reaction of fatty acid synthesis by the addition to an acyl acceptor of two carbons from malonyl-ACP. Catalyzes the first condensation reaction which initiates fatty acid synthesis and may therefore play a role in governing the total rate of fatty acid production. Possesses both acetoacetyl-ACP synthase and acetyl transacylase activities. Its substrate specificity determines the biosynthesis of branched-chain and/or straight-chain of fatty acids. The polypeptide is Beta-ketoacyl-[acyl-carrier-protein] synthase III (Wolbachia sp. subsp. Brugia malayi (strain TRS)).